The chain runs to 447 residues: uncharacterized protein (447 aa).

The next 2 membrane-spanning stretches (helical) occupy residues 380–400 (VLEI…LLLT) and 412–432 (ILGF…GVYV).

It is found in the cell membrane. This is an uncharacterized protein from Methanocaldococcus jannaschii (strain ATCC 43067 / DSM 2661 / JAL-1 / JCM 10045 / NBRC 100440) (Methanococcus jannaschii).